We begin with the raw amino-acid sequence, 527 residues long: Bifunctional purine biosynthesis protein PurH (527 aa).

The MGS-like domain occupies 9–156 (MARKPIRRAL…KNHPSVAVVT (148 aa)).

The protein belongs to the PurH family.

It carries out the reaction (6R)-10-formyltetrahydrofolate + 5-amino-1-(5-phospho-beta-D-ribosyl)imidazole-4-carboxamide = 5-formamido-1-(5-phospho-D-ribosyl)imidazole-4-carboxamide + (6S)-5,6,7,8-tetrahydrofolate. The catalysed reaction is IMP + H2O = 5-formamido-1-(5-phospho-D-ribosyl)imidazole-4-carboxamide. It functions in the pathway purine metabolism; IMP biosynthesis via de novo pathway; 5-formamido-1-(5-phospho-D-ribosyl)imidazole-4-carboxamide from 5-amino-1-(5-phospho-D-ribosyl)imidazole-4-carboxamide (10-formyl THF route): step 1/1. Its pathway is purine metabolism; IMP biosynthesis via de novo pathway; IMP from 5-formamido-1-(5-phospho-D-ribosyl)imidazole-4-carboxamide: step 1/1. The protein is Bifunctional purine biosynthesis protein PurH of Mycobacterium leprae (strain Br4923).